Reading from the N-terminus, the 320-residue chain is Homeobox-leucine zipper protein HOX25 (320 aa).

The homeobox DNA-binding region spans Ala79–Gln139. Residues Lys138–Asn182 form a leucine-zipper region. Disordered regions lie at residues Ala181–Gln209 and Asp249–Ser282. The segment covering Ser265–Tyr278 has biased composition (acidic residues).

It belongs to the HD-ZIP homeobox family. Class I subfamily. As to expression, expressed in roots, leaf sheaths and blades and panicles.

Its subcellular location is the nucleus. Its function is as follows. Probable transcription factor. The polypeptide is Homeobox-leucine zipper protein HOX25 (HOX25) (Oryza sativa subsp. japonica (Rice)).